The chain runs to 184 residues: MQQFAKDILASLEIKMTQAQELMLKNFCDIRTGTANPNILDKITVNYYGATTFLKTLASISVSEGNQINIKPYDSNLIPNIKKVLLASNLGITPQTDGVVVRLVFPKPTEERRKALMKEVEQLSEKTKVAIRNVRREGNDKIKKVELTKDLETFYLNQIQTLTDKNIKLIDKQTATKNIELSKA.

This sequence belongs to the RRF family.

The protein resides in the cytoplasm. In terms of biological role, responsible for the release of ribosomes from messenger RNA at the termination of protein biosynthesis. May increase the efficiency of translation by recycling ribosomes from one round of translation to another. This chain is Ribosome-recycling factor, found in Aster yellows witches'-broom phytoplasma (strain AYWB).